The chain runs to 102 residues: Small ribosomal subunit protein uS10 (102 aa).

This sequence belongs to the universal ribosomal protein uS10 family. As to quaternary structure, part of the 30S ribosomal subunit.

Functionally, involved in the binding of tRNA to the ribosomes. The protein is Small ribosomal subunit protein uS10 of Streptococcus thermophilus (strain CNRZ 1066).